The following is a 170-amino-acid chain: Ribosome maturation factor RimM (170 aa).

The 72-residue stretch at 92–163 (KEGWYYFELE…RMDVELPPGL (72 aa)) folds into the PRC barrel domain.

This sequence belongs to the RimM family. As to quaternary structure, binds ribosomal protein uS19.

It is found in the cytoplasm. In terms of biological role, an accessory protein needed during the final step in the assembly of 30S ribosomal subunit, possibly for assembly of the head region. Essential for efficient processing of 16S rRNA. May be needed both before and after RbfA during the maturation of 16S rRNA. It has affinity for free ribosomal 30S subunits but not for 70S ribosomes. This is Ribosome maturation factor RimM from Desulfitobacterium hafniense (strain Y51).